Consider the following 102-residue polypeptide: Carboxysome shell protein CcmK3 (102 aa).

The BMC domain occupies 4-90 (AVGTIQTLGF…PQENVETVMP (87 aa)).

The protein belongs to the bacterial microcompartments protein family. CcmK subfamily. Interacts stably with CcmK4, probably forms heterohexamers with a 1:2 CcmK3:CcmK4 stoichiometry. Bulky residues in the pore region probably preclude the formation of homohexamers by this subunit.

It localises to the carboxysome. A non-essential, minor shell protein of the carboxysome, a polyhedral inclusion where RuBisCO (ribulose bisphosphate carboxylase, rbcL-rbcS) is sequestered. Hexamers form sheets that form the facets of the polyhedral carboxysome. In PCC 7942 there are several CcmK paralogs with presumably functional differences. This subunit probably only makes heterohexamers with CcmK4. The CcmK3-CcmK4 heterohexmers have been suggested to cap other hexamers, perhaps to alter metabolite flux. This chain is Carboxysome shell protein CcmK3, found in Synechococcus elongatus (strain ATCC 33912 / PCC 7942 / FACHB-805) (Anacystis nidulans R2).